We begin with the raw amino-acid sequence, 216 residues long: MLEELLNGNIEKKTITQIYGPPGVGKTNICILSMLKAIENGKNVVYIDTEGSLSIERIKQLSEQDSDELLKSIIIYEPSSFEEQSEALEKIFFLENIGLIVIDGIVSLYRLELCDNINENTKLNRMLGKQISNLLKVARMKNSGILITNQVKDSINGIEPAGGRLLEYWSKSIIKLEKTESIRKLTLEKHRHAKEGENLRFRIVQNGLEIINKSYQ.

This sequence belongs to the eukaryotic RecA-like protein family. RadB subfamily.

Its function is as follows. Involved in DNA repair and in homologous recombination. May regulate the cleavage reactions of the branch-structured DNA. Has a very weak ATPase activity that is not stimulated by DNA. Binds DNA but does not promote DNA strands exchange. The polypeptide is DNA repair and recombination protein RadB (Methanococcus maripaludis (strain C5 / ATCC BAA-1333)).